The following is an 861-amino-acid chain: DNA mismatch repair protein MutS (861 aa).

618-625 provides a ligand contact to ATP; that stretch reads GPNMGGKS.

This sequence belongs to the DNA mismatch repair MutS family.

In terms of biological role, this protein is involved in the repair of mismatches in DNA. It is possible that it carries out the mismatch recognition step. This protein has a weak ATPase activity. The sequence is that of DNA mismatch repair protein MutS from Shewanella frigidimarina (strain NCIMB 400).